The following is a 423-amino-acid chain: Probable histone-binding protein rbbD (423 aa).

WD repeat units follow at residues 119–159 (NHEG…LEPT), 172–212 (GHKK…KSDS), 222–262 (GHTS…KPIH), 266–306 (AHNS…NRLH), 310–350 (SHTD…EEQN), and 367–407 (GHTS…YNDR).

It belongs to the WD repeat RBAP46/RBAP48/MSI1 family. Probably binds directly to helix 1 of the histone fold of histone H4, a region that is not accessible when H4 is in chromatin.

Its subcellular location is the nucleus. Functionally, core histone-binding subunit that may target chromatin assembly factors, chromatin remodeling factors and histone deacetylases to their histone substrates in a manner that is regulated by nucleosomal DNA. Component of several complexes which regulate chromatin metabolism. The protein is Probable histone-binding protein rbbD (rbbD) of Dictyostelium discoideum (Social amoeba).